The sequence spans 547 residues: Phosphoethanolamine transferase EptA (547 aa).

The Cytoplasmic segment spans residues Met1 to Pro9. The helical transmembrane segment at Ser10–Ile30 threads the bilayer. Over Ala31–Asn47 the chain is Periplasmic. The chain crosses the membrane as a helical span at residues Val48 to Leu68. The Cytoplasmic segment spans residues Ser69–Ala79. A helical transmembrane segment spans residues Cys80 to Ile100. The Periplasmic portion of the chain corresponds to Asp101–Gln123. The chain crosses the membrane as a helical span at residues Met124–Ile144. Topologically, residues Lys145–Val154 are cytoplasmic. A helical transmembrane segment spans residues Leu155 to Phe175. Topologically, residues Tyr176–Glu547 are periplasmic.

The protein belongs to the phosphoethanolamine transferase family. EptA subfamily. In terms of assembly, has been isolated as a 91 kDa complex containing ZipA-EptA and an unidentified 24 kDa protein.

It is found in the cell inner membrane. In terms of biological role, catalyzes the addition of a phosphoethanolamine moiety to the lipid A. The phosphoethanolamine modification is required for resistance to polymyxin. The chain is Phosphoethanolamine transferase EptA (eptA) from Escherichia coli (strain K12).